Consider the following 482-residue polypeptide: O-acyltransferase ausP (482 aa).

Residues H180 and D412 each act as proton acceptor in the active site.

The protein belongs to the plant acyltransferase family. In terms of assembly, monomer.

The protein operates within secondary metabolite biosynthesis; terpenoid biosynthesis. In terms of biological role, O-acyltransferase; part of the gene cluster B that mediates the biosynthesis of the fungal meroterpenoid acetoxydehydroaustin. The first step of the pathway is the synthesis of 3,5-dimethylorsellinic acid by the polyketide synthase ausA. 3,5-dimethylorsellinic acid is then prenylated by the polyprenyl transferase ausN. Further epoxidation by the FAD-dependent monooxygenase ausM and cyclization by the probable terpene cyclase ausL lead to the formation of protoaustinoid A. Protoaustinoid A is then oxidized to spiro-lactone preaustinoid A3 by the combined action of the FAD-binding monooxygenases ausB and ausC, and the dioxygenase ausE. Acid-catalyzed keto-rearrangement and ring contraction of the tetraketide portion of preaustinoid A3 by ausJ lead to the formation of preaustinoid A4. The aldo-keto reductase ausK, with the help of ausH, is involved in the next step by transforming preaustinoid A4 into isoaustinone which is in turn hydroxylated by the P450 monooxygenase ausI to form austinolide. The cytochrome P450 monooxygenase ausG then modifies austinolide to austinol. Austinol is further acetylated to austin by the O-acetyltransferase ausP, which spontaneously changes to dehydroaustin. The cytochrome P450 monooxygenase then converts dehydroaustin is into 7-dehydrodehydroaustin. The hydroxylation catalyzed by ausR permits the second O-acetyltransferase ausQ to add an additional acetyl group to the molecule, leading to the formation of acetoxydehydroaustin. Due to genetic rearrangements of the clusters and the subsequent loss of some enzymes, the end product of the Penicillium brasilianum austinoid biosynthesis clusters is acetoxydehydroaustin. This is O-acyltransferase ausP from Penicillium brasilianum.